The primary structure comprises 102 residues: Small ribosomal subunit protein uS10 (102 aa).

The protein belongs to the universal ribosomal protein uS10 family. As to quaternary structure, part of the 30S ribosomal subunit.

Involved in the binding of tRNA to the ribosomes. In Streptococcus pneumoniae (strain CGSP14), this protein is Small ribosomal subunit protein uS10.